The chain runs to 175 residues: Ribulose bisphosphate carboxylase small subunit, chloroplastic 2 (175 aa).

The N-terminal 46 residues, 1–46 (MAPTVMASSATSVAPFQGLKSTAGLPVSRRSTNSGFGNVSNGGRIK), are a transit peptide targeting the chloroplast.

The protein belongs to the RuBisCO small chain family. Heterohexadecamer of 8 large and 8 small subunits.

The protein localises to the plastid. It is found in the chloroplast. Its function is as follows. RuBisCO catalyzes two reactions: the carboxylation of D-ribulose 1,5-bisphosphate, the primary event in carbon dioxide fixation, as well as the oxidative fragmentation of the pentose substrate. Both reactions occur simultaneously and in competition at the same active site. Although the small subunit is not catalytic it is essential for maximal activity. This is Ribulose bisphosphate carboxylase small subunit, chloroplastic 2 from Oryza sativa subsp. japonica (Rice).